A 163-amino-acid polypeptide reads, in one-letter code: Transcription antitermination protein NusB (163 aa).

The protein belongs to the NusB family.

Involved in transcription antitermination. Required for transcription of ribosomal RNA (rRNA) genes. Binds specifically to the boxA antiterminator sequence of the ribosomal RNA (rrn) operons. This is Transcription antitermination protein NusB from Granulibacter bethesdensis (strain ATCC BAA-1260 / CGDNIH1).